The sequence spans 465 residues: Sensor histidine kinase ZraS (465 aa).

Over Met1–Trp14 the chain is Cytoplasmic. A helical transmembrane segment spans residues Leu15–Ile35. Topologically, residues Arg36–Asn202 are periplasmic. Residues Thr203 to Trp223 traverse the membrane as a helical segment. At His224–Asp465 the chain is on the cytoplasmic side. The Histidine kinase domain maps to Gly253–Ala461. At His256 the chain carries Phosphohistidine; by autocatalysis.

In terms of processing, autophosphorylated.

It is found in the cell inner membrane. It carries out the reaction ATP + protein L-histidine = ADP + protein N-phospho-L-histidine.. Its activity is regulated as follows. Activity of the ZraS/ZraR two-component system is repressed by the zinc-bound form of ZraP, which probably interacts with the periplasmic region of ZraS. In terms of biological role, part of the Zra signaling pathway, an envelope stress response (ESR) system composed of the periplasmic accessory protein ZraP, the histidine kinase ZraS and the transcriptional regulator ZraR. The ZraPSR system contributes to antibiotic resistance and is important for membrane integrity in the presence of membrane-targeting biocides. ZraS is a member of the two-component regulatory system ZraS/ZraR. Functions as a membrane-associated sensor kinase that phosphorylates ZraR in response to high concentrations of Zn(2+) or Pb(2+) in the medium. This Salmonella typhimurium (strain LT2 / SGSC1412 / ATCC 700720) protein is Sensor histidine kinase ZraS.